The chain runs to 224 residues: Urease accessory protein UreF (224 aa).

This sequence belongs to the UreF family. UreD, UreF and UreG form a complex that acts as a GTP-hydrolysis-dependent molecular chaperone, activating the urease apoprotein by helping to assemble the nickel containing metallocenter of UreC. The UreE protein probably delivers the nickel.

The protein resides in the cytoplasm. Functionally, required for maturation of urease via the functional incorporation of the urease nickel metallocenter. The chain is Urease accessory protein UreF from Pseudomonas fluorescens (strain ATCC BAA-477 / NRRL B-23932 / Pf-5).